Reading from the N-terminus, the 66-residue chain is MAKDAITGARTRFGNQRSHALNSSRRSWKPNLQKVTVKINGAAPKKVYLTARTLKAGLKNGSIERV.

The tract at residues 1-26 is disordered; the sequence is MAKDAITGARTRFGNQRSHALNSSRR. The span at 13-25 shows a compositional bias: polar residues; the sequence is FGNQRSHALNSSR.

This sequence belongs to the bacterial ribosomal protein bL28 family.

The chain is Large ribosomal subunit protein bL28 from Leuconostoc mesenteroides subsp. mesenteroides (strain ATCC 8293 / DSM 20343 / BCRC 11652 / CCM 1803 / JCM 6124 / NCDO 523 / NBRC 100496 / NCIMB 8023 / NCTC 12954 / NRRL B-1118 / 37Y).